The chain runs to 89 residues: Class I hydrophobin C (89 aa).

A signal peptide spans 1 to 16 (MKFSLATIALAAAVAA). Cystine bridges form between cysteine 28–cysteine 68, cysteine 39–cysteine 60, cysteine 40–cysteine 52, and cysteine 69–cysteine 85. Asparagine 36 carries N-linked (GlcNAc...) asparagine glycosylation.

It belongs to the fungal hydrophobin family.

The protein localises to the secreted. It is found in the cell wall. Its subcellular location is the vacuole. The protein resides in the cytoplasmic vesicle. In terms of biological role, aerial growth, conidiation, and dispersal of filamentous fungi in the environment rely upon a capability of their secreting small amphipathic proteins called hydrophobins (HPBs) with low sequence identity. Class I can self-assemble into an outermost layer of rodlet bundles on aerial cell surfaces, conferring cellular hydrophobicity that supports fungal growth, development and dispersal; whereas Class II form highly ordered films at water-air interfaces through intermolecular interactions but contribute nothing to the rodlet structure. Hyd1C contributes to certain cell wall-related features, such as hydrophobicity but is not involved in cell wall-related events during fungal proliferation in host hemocoel. Does not contribute to conidial hydrophobicity. In Beauveria bassiana (strain ARSEF 2860) (White muscardine disease fungus), this protein is Class I hydrophobin C.